We begin with the raw amino-acid sequence, 76 residues long: Esculentin-2CG1 (76 aa).

Positions 1–22 are cleaved as a signal peptide; the sequence is MFTMKKSMLLLFFLGTISLSLC. The propeptide at 23-37 is removed in mature form; sequence EEERSADEDDGEEEV. The cysteines at positions 70 and 76 are disulfide-linked.

As to expression, expressed by the skin glands.

Its subcellular location is the secreted. Antimicrobial peptide active against a variety of Gram-positive and some Gram-negative bacterial strains. Has antifungal activity against a slime mold isolate. Has hemolytic activity against human erythrocytes. In Amolops chunganensis (Chungan torrent frog), this protein is Esculentin-2CG1.